The primary structure comprises 348 residues: MDENKQKALAAALGQIEKQFGKGSIMRLGDNRTMDVETISTGSLSLDIALGAGGLPMGRIVEVYGPESSGKTTLTLELIAAAQRVGKTCAFIDAEHALDPIYAKKLGVNIDELLVSQPDTGEQALEICDALARSGAIDVIVIDSVAALTPKAEIEGEMGDSHMGLQARMLSQAMRKLTGNLKQSNCMCIFINQIRMKIGVMFGNPETTTGGNALKFYASVRLDIRRTGSIKEGDEVVGNETRIKVVKNKIAAPFKQADTQILYGQGFNREGELVDLGVKHKLVEKAGAWYSYNGDKIGQGKANACKFLRENPAAAMALDTKLREMLLNPAELIVEEPILSEMPQEEEL.

An ATP-binding site is contributed by Gly-65–Thr-72.

Belongs to the RecA family.

It is found in the cytoplasm. Functionally, can catalyze the hydrolysis of ATP in the presence of single-stranded DNA, the ATP-dependent uptake of single-stranded DNA by duplex DNA, and the ATP-dependent hybridization of homologous single-stranded DNAs. It interacts with LexA causing its activation and leading to its autocatalytic cleavage. In Vibrio anguillarum (strain ATCC 68554 / 775) (Listonella anguillarum), this protein is Protein RecA.